A 310-amino-acid polypeptide reads, in one-letter code: tRNA dimethylallyltransferase (310 aa).

14 to 21 (GPTASGKT) is a binding site for ATP. 16–21 (TASGKT) is a binding site for substrate. 3 interaction with substrate tRNA regions span residues 39–42 (DSAL), 163–167 (QRLSR), and 244–249 (RCVGYR).

The protein belongs to the IPP transferase family. In terms of assembly, monomer. It depends on Mg(2+) as a cofactor.

It carries out the reaction adenosine(37) in tRNA + dimethylallyl diphosphate = N(6)-dimethylallyladenosine(37) in tRNA + diphosphate. Its function is as follows. Catalyzes the transfer of a dimethylallyl group onto the adenine at position 37 in tRNAs that read codons beginning with uridine, leading to the formation of N6-(dimethylallyl)adenosine (i(6)A). In Aeromonas salmonicida (strain A449), this protein is tRNA dimethylallyltransferase.